Here is a 105-residue protein sequence, read N- to C-terminus: Neuropeptide-like protein 32 (105 aa).

The N-terminal stretch at 1-22 (MRQFNLLLVFCLIALTALPVFS) is a signal peptide. Positions 23–54 (FPNGLTMDSIDMEPMGAFDENGAADESPRVKR) are excised as a propeptide. Gly-59 bears the Glycine amide mark. Position 64 is a tryptophan amide (Trp-64). Residues Gly-68, Gly-73, and Gly-80 each carry the glycine amide modification. A Tryptophan amide modification is found at Trp-86. Glycine amide occurs at positions 91 and 98. Trp-103 is modified (tryptophan amide).

This sequence belongs to the YARP (YGGW-amide related peptide) family.

The protein resides in the secreted. Functionally, may have antimicrobial activity. The chain is Neuropeptide-like protein 32 (nlp-32) from Caenorhabditis elegans.